A 604-amino-acid chain; its full sequence is Aspartate--tRNA(Asp/Asn) ligase (604 aa).

Glutamate 174 is an L-aspartate binding site. Residues 198–201 (QLYK) are aspartate. L-aspartate is bound at residue arginine 220. ATP is bound by residues 220–222 (RDE) and glutamine 229. An L-aspartate-binding site is contributed by histidine 460. Glutamate 494 contributes to the ATP binding site. Arginine 501 lines the L-aspartate pocket. 546–549 (GLDR) contacts ATP.

The protein belongs to the class-II aminoacyl-tRNA synthetase family. Type 1 subfamily. As to quaternary structure, homodimer.

It is found in the cytoplasm. The catalysed reaction is tRNA(Asx) + L-aspartate + ATP = L-aspartyl-tRNA(Asx) + AMP + diphosphate. In terms of biological role, aspartyl-tRNA synthetase with relaxed tRNA specificity since it is able to aspartylate not only its cognate tRNA(Asp) but also tRNA(Asn). Reaction proceeds in two steps: L-aspartate is first activated by ATP to form Asp-AMP and then transferred to the acceptor end of tRNA(Asp/Asn). The polypeptide is Aspartate--tRNA(Asp/Asn) ligase (Paracidovorax citrulli (strain AAC00-1) (Acidovorax citrulli)).